The sequence spans 165 residues: Probable velvet family sexual development regulator CC1G_12219 (165 aa).

Residues Met1–Arg121 enclose the Velvet domain.

It belongs to the velvet family.

The protein localises to the nucleus. Its function is as follows. Velvet-domain-containing protein that probably acts as a positive regulator of sexual development. In Coprinopsis cinerea (strain Okayama-7 / 130 / ATCC MYA-4618 / FGSC 9003) (Inky cap fungus), this protein is Probable velvet family sexual development regulator CC1G_12219.